The chain runs to 71 residues: Small ribosomal subunit protein bS21 (71 aa).

Basic residues predominate over residues 48-59 (AKASAVKRHAKK). The segment at 48-71 (AKASAVKRHAKKLSRENARRIRLY) is disordered. Positions 60-71 (LSRENARRIRLY) are enriched in basic and acidic residues.

This sequence belongs to the bacterial ribosomal protein bS21 family.

The polypeptide is Small ribosomal subunit protein bS21 (Aeromonas hydrophila subsp. hydrophila (strain ATCC 7966 / DSM 30187 / BCRC 13018 / CCUG 14551 / JCM 1027 / KCTC 2358 / NCIMB 9240 / NCTC 8049)).